We begin with the raw amino-acid sequence, 323 residues long: Sphingolipid delta(4)-desaturase DES1 (323 aa).

The N-myristoyl glycine moiety is linked to residue G2. 2 helical membrane passes run P41–V61 and W68–I88. The Histidine box-1 motif lies at H89–H93. A helical membrane pass occupies residues W107–Y127. The Histidine box-2 motif lies at H128–H132. A run of 3 helical transmembrane segments spans residues F152–F172, Y184–L204, and L209–F229. The Histidine box-3 signature appears at H259 to H263. Phosphoserine is present on S307.

Belongs to the fatty acid desaturase type 1 family. DEGS subfamily. Interacts with RLBP1; the interaction increases synthesis of chromophore-precursors by DEGS1. Post-translationally, myristoylation can target the enzyme to the mitochondria leading to an increase in ceramide levels.

The protein resides in the mitochondrion membrane. The protein localises to the endoplasmic reticulum membrane. It carries out the reaction an N-acylsphinganine + 2 Fe(II)-[cytochrome b5] + O2 + 2 H(+) = an N-acylsphing-4-enine + 2 Fe(III)-[cytochrome b5] + 2 H2O. The enzyme catalyses all-trans-retinol = 11-cis-retinol. It catalyses the reaction all-trans-retinol = 9-cis-retinol. The catalysed reaction is all-trans-retinol = 13-cis-retinol. It carries out the reaction 11-cis-retinol = 13-cis-retinol. The enzyme catalyses 11-cis-retinol = 9-cis-retinol. Functionally, has sphingolipid-delta-4-desaturase activity. Converts D-erythro-sphinganine to D-erythro-sphingosine (E-sphing-4-enine). Catalyzes the equilibrium isomerization of retinols. In Pongo abelii (Sumatran orangutan), this protein is Sphingolipid delta(4)-desaturase DES1 (DEGS1).